The primary structure comprises 406 residues: Endo-xylogalacturonan hydrolase A (406 aa).

Residues 1-18 (MALYRNLYLLASLGLSSA) form the signal peptide. PbH1 repeat units follow at residues 183–213 (ATNVVFSNLKMDANSKSDNPPKNTDGFDIGE), 214–257 (STYV…SVGS), 266–289 (VKNIYVTGATMINSTKAAGIKTYP), 299–320 (VSNVTFNDFTVDNSDYAFQIQS), and 333–375 (PGNA…SISG). Residue aspartate 228 is the Proton donor of the active site. Histidine 251 is an active-site residue. Residues asparagine 278 and asparagine 301 are each glycosylated (N-linked (GlcNAc...) asparagine).

The protein belongs to the glycosyl hydrolase 28 family.

Its subcellular location is the secreted. Pectinolytic enzyme involved in the degradation of xylogalacturonan (xga), a galacturonan backbone heavily substituted with xylose, and which is one important component of the hairy regions of pectin. Activity requires a galacturonic acid backbone substituted with xylose. This is Endo-xylogalacturonan hydrolase A (xghA) from Aspergillus tubingensis.